We begin with the raw amino-acid sequence, 213 residues long: Uridine kinase (213 aa).

14–21 contributes to the ATP binding site; the sequence is GASASGKS.

Belongs to the uridine kinase family.

It is found in the cytoplasm. The catalysed reaction is uridine + ATP = UMP + ADP + H(+). It catalyses the reaction cytidine + ATP = CMP + ADP + H(+). It functions in the pathway pyrimidine metabolism; CTP biosynthesis via salvage pathway; CTP from cytidine: step 1/3. The protein operates within pyrimidine metabolism; UMP biosynthesis via salvage pathway; UMP from uridine: step 1/1. The protein is Uridine kinase of Vibrio vulnificus (strain CMCP6).